Consider the following 244-residue polypeptide: Lectin (244 aa).

Residues 1–20 (TETETTSFSIPKTDQPSSPK) form a disordered region.

The protein belongs to the leguminous lectin family. In terms of assembly, homodimer. In contrast to other Lathyrus lectins which are tetramer of two alpha and two beta chains.

The chain is Lectin from Lathyrus sphaericus (Spring vetchling).